A 353-amino-acid chain; its full sequence is Putrescine N-methyltransferase 2 (353 aa).

Positions 15–50 (KSGAIPMNGHHNGTSKHQNGHKNGTSEQQNGTISLD) are disordered. Over residues 25 to 50 (HNGTSKHQNGHKNGTSEQQNGTISLD) the composition is skewed to polar residues. The PABS domain maps to 64–301 (PGWFSEFSAL…GVIGYMLCST (238 aa)). S-adenosyl-L-methionine-binding positions include glutamine 95, glutamate 170, and 201–202 (DG). The Proton acceptor role is filled by aspartate 220. Tyrosine 289 is a binding site for S-adenosyl-L-methionine.

This sequence belongs to the class I-like SAM-binding methyltransferase superfamily. Putrescine methyltransferase family. In terms of tissue distribution, predominantly expressed in roots.

It catalyses the reaction putrescine + S-adenosyl-L-methionine = N-methylputrescine + S-adenosyl-L-homocysteine + H(+). The protein operates within alkaloid biosynthesis; nicotine biosynthesis. In terms of biological role, involved in the biosynthesis of pyridine alkaloid natural products, leading mainly to the production of anabasine, anatabine, nicotine and nornicotine, effective deterrents against herbivores with antiparasitic and pesticide properties (neurotoxins); nornicotine serves as the precursor in the synthesis of the carcinogen compound N'-nitrosonornicotine (NNN). Methyltransferase that mediates the conversion of putrescine to N-methylputrescine. Promotes leaves ripening. The protein is Putrescine N-methyltransferase 2 of Nicotiana tabacum (Common tobacco).